The chain runs to 75 residues: ORF2p protein (75 aa).

The segment at 13–18 is important for viral replication in intestinal cells; it reads WIGHPV. The hydrophobic stretch at 23-45 threads the membrane; sequence IVYLFVGFTPLTLETLHTLNYII. The tract at residues 53–75 is disordered; sequence APRSPHSDPARMRIPTQPRKAPL.

It is found in the host cytoplasmic vesicle membrane. Its function is as follows. Facilitates virus release from intestinal cells in vitro, possibly through the host autophagic pathway. The sequence is that of ORF2p protein from Human enterovirus 71 (strain USA/BrCr/1970) (EV71).